Reading from the N-terminus, the 77-residue chain is uncharacterized protein (77 aa).

This is an uncharacterized protein from Xylella fastidiosa (strain 9a5c).